We begin with the raw amino-acid sequence, 270 residues long: Protein-ADP-ribose hydrolase (270 aa).

The Macro domain occupies 73-267 (VSVKDCQKTN…LYDTYLQKEN (195 aa)). The ADP-D-ribose site is built by aspartate 92, isoleucine 93, and asparagine 106. Residues cysteine 112, histidine 117, and cysteine 119 each coordinate Zn(2+). Cysteine 119, isoleucine 120, aspartate 121, serine 212, threonine 213, glycine 214, glutamate 215, and phenylalanine 216 together coordinate ADP-D-ribose.

It belongs to the MacroD-type family. Zn-Macro subfamily. The cofactor is Zn(2+).

The enzyme catalyses 4-O-(ADP-D-ribosyl)-L-aspartyl-[protein] + H2O = L-aspartyl-[protein] + ADP-D-ribose + H(+). ADP-ribosylhydrolase that specifically reverses the SirTM-mediated mono-ADP-ribosylation at an asparatate residue of GcvH-L, by releasing ADP-ribose from the target protein. May play a role in the regulation of the response to host-induced oxidative stress. The protein is Protein-ADP-ribose hydrolase of Streptococcus pyogenes serotype M1.